The following is a 209-amino-acid chain: Large ribosomal subunit protein uL3 (209 aa).

Gln150 carries the N5-methylglutamine modification.

This sequence belongs to the universal ribosomal protein uL3 family. As to quaternary structure, part of the 50S ribosomal subunit. Forms a cluster with proteins L14 and L19. Post-translationally, methylated by PrmB.

One of the primary rRNA binding proteins, it binds directly near the 3'-end of the 23S rRNA, where it nucleates assembly of the 50S subunit. The chain is Large ribosomal subunit protein uL3 from Salmonella arizonae (strain ATCC BAA-731 / CDC346-86 / RSK2980).